The chain runs to 2465 residues: Protein DOP1A (2465 aa).

Disordered regions lie at residues 559-600 (PSGQ…SSES), 625-646 (GAAA…TVGS), and 705-733 (TEHQ…KEKN). Positions 633 to 646 (STSSETETASTVGS) are enriched in low complexity. A compositionally biased stretch (basic and acidic residues) spans 707 to 733 (HQGDLGREQGETSKWDRNSQGDVKEKN). Position 1266 is a phosphoserine (S1266). Basic and acidic residues-rich tracts occupy residues 1282–1291 (EKETIVKESG) and 1305–1315 (KKDDDKKKSSN). The interval 1282 to 1315 (EKETIVKESGKQPGAKPKVKLARKKDDDKKKSSN) is disordered.

Belongs to the DOP1 family.

It localises to the golgi apparatus membrane. Its function is as follows. May be involved in protein traffic between late Golgi and early endosomes. In Homo sapiens (Human), this protein is Protein DOP1A.